A 381-amino-acid chain; its full sequence is MNEKRKIQVLCIDDSALIRSILKEIINAQPDMEVVGVAPDPIIARDLIKQTNPDVLTLDVEMPKMDGLDFLEKLMRLRPTPVVMISSLTERGSEATLRALELGAVDFVAKPKLGMRDGMNEYADQIADKIRAAARARLRPRTASPAPAPAAASPAHAVHTAHAVHARPEHDAAAVPAPARTHFSSTEKLIIVGASTGGTEAIKDFLLEMPPDCPGILIVQHMPAGFTTSFAKRLDGLCRIRVKEAVHGERVLPGHAYIAPGDMHLSLGRSGANYVTELDQNPPVNRHRPAVDVLFRSAARNAGANALGVILTGMGKDGAAGMLEMRNAGAYNVAQDEASCVVYGMPKEAVAHGGVHEILPLHQIGPHVLARLSAHGRVTRV.

In terms of domain architecture, Response regulatory spans 8–125; the sequence is QVLCIDDSAL…RDGMNEYADQ (118 aa). Residue Asp-59 is modified to 4-aspartylphosphate. Residues 183–375 enclose the CheB-type methylesterase domain; it reads FSSTEKLIIV…PHVLARLSAH (193 aa). Residues Ser-195, His-221, and Asp-317 contribute to the active site.

This sequence belongs to the CheB family. Post-translationally, phosphorylated by CheA. Phosphorylation of the N-terminal regulatory domain activates the methylesterase activity.

It is found in the cytoplasm. It catalyses the reaction [protein]-L-glutamate 5-O-methyl ester + H2O = L-glutamyl-[protein] + methanol + H(+). The enzyme catalyses L-glutaminyl-[protein] + H2O = L-glutamyl-[protein] + NH4(+). Its function is as follows. Involved in chemotaxis. Part of a chemotaxis signal transduction system that modulates chemotaxis in response to various stimuli. Catalyzes the demethylation of specific methylglutamate residues introduced into the chemoreceptors (methyl-accepting chemotaxis proteins or MCP) by CheR. Also mediates the irreversible deamidation of specific glutamine residues to glutamic acid. The polypeptide is Protein-glutamate methylesterase/protein-glutamine glutaminase (Ralstonia nicotianae (strain ATCC BAA-1114 / GMI1000) (Ralstonia solanacearum)).